The following is a 70-amino-acid chain: DNA-directed RNA polymerase subunit omega (70 aa).

The protein belongs to the RNA polymerase subunit omega family. As to quaternary structure, the RNAP catalytic core consists of 2 alpha, 1 beta, 1 beta' and 1 omega subunit. When a sigma factor is associated with the core the holoenzyme is formed, which can initiate transcription.

The enzyme catalyses RNA(n) + a ribonucleoside 5'-triphosphate = RNA(n+1) + diphosphate. Its function is as follows. Promotes RNA polymerase assembly. Latches the N- and C-terminal regions of the beta' subunit thereby facilitating its interaction with the beta and alpha subunits. The chain is DNA-directed RNA polymerase subunit omega from Thermoanaerobacter pseudethanolicus (strain ATCC 33223 / 39E) (Clostridium thermohydrosulfuricum).